We begin with the raw amino-acid sequence, 294 residues long: Nucleotide-binding protein Dde_1774 (294 aa).

ATP is bound at residue 14–21 (GLSGAGKS). Residue 66-69 (DLRQ) participates in GTP binding.

It belongs to the RapZ-like family.

Displays ATPase and GTPase activities. This chain is Nucleotide-binding protein Dde_1774, found in Oleidesulfovibrio alaskensis (strain ATCC BAA-1058 / DSM 17464 / G20) (Desulfovibrio alaskensis).